The sequence spans 429 residues: Histidine--tRNA ligase (429 aa).

The protein belongs to the class-II aminoacyl-tRNA synthetase family. As to quaternary structure, homodimer.

It localises to the cytoplasm. The enzyme catalyses tRNA(His) + L-histidine + ATP = L-histidyl-tRNA(His) + AMP + diphosphate + H(+). The sequence is that of Histidine--tRNA ligase from Pseudomonas paraeruginosa (strain DSM 24068 / PA7) (Pseudomonas aeruginosa (strain PA7)).